A 457-amino-acid polypeptide reads, in one-letter code: Argininosuccinate lyase (457 aa).

It belongs to the lyase 1 family. Argininosuccinate lyase subfamily.

The protein localises to the cytoplasm. It carries out the reaction 2-(N(omega)-L-arginino)succinate = fumarate + L-arginine. The protein operates within amino-acid biosynthesis; L-arginine biosynthesis; L-arginine from L-ornithine and carbamoyl phosphate: step 3/3. The sequence is that of Argininosuccinate lyase from Yersinia pseudotuberculosis serotype IB (strain PB1/+).